A 31-amino-acid chain; its full sequence is Cyclotide mden-J (31 aa).

The cyclopeptide (Gly-Asn) cross-link spans 1–31 (GSIPCGESCVYIPCISSIVGCACKSKVCYKN). Intrachain disulfides connect Cys5–Cys21, Cys9–Cys23, and Cys14–Cys28.

It belongs to the cyclotide family. Bracelet subfamily. This is a cyclic peptide.

Functionally, probably participates in a plant defense mechanism. This is Cyclotide mden-J from Melicytus dentatus (Tree violet).